A 333-amino-acid polypeptide reads, in one-letter code: GDP-mannose transporter GONST1 (333 aa).

9 helical membrane-spanning segments follow: residues 33-55 (ALLS…KFVL), 62-84 (AGIF…LSLM), 99-121 (VWFP…LKYI), 153-170 (VWAA…GGIT), 174-196 (FNAV…SLTL), 216-238 (SMVL…FFNE), 253-275 (FWMV…MWFL), 282-304 (TYSL…LFNV), and 308-325 (LQNS…VVFA).

It belongs to the nucleotide-sugar transporter family. GDP-Mannose:GMP antiporter (GMA) (TC 2.A.7.13) subfamily.

It localises to the golgi apparatus membrane. Involved in the import of GDP-mannose from the cytoplasm into the Golgi lumen. Required for the luminal synthesis of a variety of plant cell surface components. Is required for the correct mannosylation of the glycosylinositol phosphoceramides (GIPC). Can indifferently transport GDP-mannose, GDP-Glucose, GDP-Fucose or GDP-Galactose in vitro. The sequence is that of GDP-mannose transporter GONST1 from Arabidopsis thaliana (Mouse-ear cress).